The primary structure comprises 178 residues: uncharacterized protein (178 aa).

The next 4 membrane-spanning stretches (helical) occupy residues 3 to 23 (IPIILTLMLFSLGFIFGFISI), 56 to 76 (IFLMLAGSITFGLSTFINLIF), 101 to 121 (LILPHGIFEISAMLISAVAGF), and 150 to 170 (LSLISIILIVIAAFIEVYITP).

It to M.jannaschii MJ0706 and Synechocystis PCC 6803 slr1478.

Its subcellular location is the cell membrane. This is an uncharacterized protein from Methanocaldococcus jannaschii (strain ATCC 43067 / DSM 2661 / JAL-1 / JCM 10045 / NBRC 100440) (Methanococcus jannaschii).